Here is a 637-residue protein sequence, read N- to C-terminus: Clathrin coat assembly protein AP180A (637 aa).

The region spanning 1–126 (MTTYFKLVKG…REFGKIKKDY (126 aa)) is the ENTH domain. Residues 555–637 (TQNHLQQQQQ…YANNLNLIDM (83 aa)) form a disordered region. 2 stretches are compositionally biased toward low complexity: residues 560–579 (QQQQ…QPQQ) and 600–622 (QPQN…TQQP). Residues 587-637 (AGANPVTNITGTVQPQNFPFYPQQQPQPEQSQTQQPVLGNQYANNLNLIDM) form a clathrin-binding region. A compositionally biased stretch (polar residues) spans 623–637 (VLGNQYANNLNLIDM).

This sequence belongs to the AP180 family. In terms of assembly, interacts with PAN1 and the clathrin heavy and light chains CHC1 and CLC1.

The protein resides in the bud. It localises to the bud neck. The protein localises to the cell membrane. Its subcellular location is the cytoplasm. Functionally, involved in endocytosis and clathrin cage assembly. This chain is Clathrin coat assembly protein AP180A (YAP1801), found in Saccharomyces cerevisiae (strain ATCC 204508 / S288c) (Baker's yeast).